Here is a 206-residue protein sequence, read N- to C-terminus: Tetrathionate response regulatory protein TtrR (206 aa).

The Response regulatory domain maps to 3-117; sequence TIHLLDDDTA…PLQAALERAL (115 aa). Position 52 is a 4-aspartylphosphate (aspartate 52). In terms of domain architecture, HTH luxR-type spans 134–194; the sequence is QQLTPKEREL…ELIRRFEKMA (61 aa). Residues 153-172 constitute a DNA-binding region (H-T-H motif); that stretch reads NREIAEAMNIAVRTVEVHRA.

Post-translationally, phosphorylated by TtrS.

The protein localises to the cytoplasm. Member of the two-component regulatory system TtrR/TtrS, which is required for synthesis of tetrathionate reductase. Positively regulates transcription of the ttrBCA operon. During mice infection, the ability to use tetrathionate as an electron acceptor is a growth advantage for S.typhimurium over the competing microbiota in the lumen of the inflamed gut. The chain is Tetrathionate response regulatory protein TtrR (ttrR) from Salmonella typhimurium (strain LT2 / SGSC1412 / ATCC 700720).